The following is a 115-amino-acid chain: Large ribosomal subunit protein bL19 (115 aa).

This sequence belongs to the bacterial ribosomal protein bL19 family.

Its function is as follows. This protein is located at the 30S-50S ribosomal subunit interface and may play a role in the structure and function of the aminoacyl-tRNA binding site. This Streptococcus suis (strain 98HAH33) protein is Large ribosomal subunit protein bL19.